The following is a 552-amino-acid chain: Cation/acetate symporter ActP (552 aa).

A run of 14 helical transmembrane segments spans residues Leu6–Gly26, Met35–Ala55, Gly78–Val98, Phe103–Ile123, Leu151–Ala171, Val185–Ala205, Trp208–Val228, Ile264–Leu284, Gly305–Val325, Leu357–Leu377, Val407–Glu427, Ile431–Leu451, Gly467–Val487, and Ile496–Leu516.

The protein belongs to the sodium:solute symporter (SSF) (TC 2.A.21) family.

It is found in the cell inner membrane. Its function is as follows. Transports acetate. This chain is Cation/acetate symporter ActP, found in Erwinia tasmaniensis (strain DSM 17950 / CFBP 7177 / CIP 109463 / NCPPB 4357 / Et1/99).